The sequence spans 157 residues: SsrA-binding protein (157 aa).

Residues 128 to 157 form a disordered region; the sequence is LARGKKQHDKRAAEKERDWEREKQRVMRRG. A compositionally biased stretch (basic and acidic residues) spans 137 to 157; the sequence is KRAAEKERDWEREKQRVMRRG.

This sequence belongs to the SmpB family.

Its subcellular location is the cytoplasm. Required for rescue of stalled ribosomes mediated by trans-translation. Binds to transfer-messenger RNA (tmRNA), required for stable association of tmRNA with ribosomes. tmRNA and SmpB together mimic tRNA shape, replacing the anticodon stem-loop with SmpB. tmRNA is encoded by the ssrA gene; the 2 termini fold to resemble tRNA(Ala) and it encodes a 'tag peptide', a short internal open reading frame. During trans-translation Ala-aminoacylated tmRNA acts like a tRNA, entering the A-site of stalled ribosomes, displacing the stalled mRNA. The ribosome then switches to translate the ORF on the tmRNA; the nascent peptide is terminated with the 'tag peptide' encoded by the tmRNA and targeted for degradation. The ribosome is freed to recommence translation, which seems to be the essential function of trans-translation. The chain is SsrA-binding protein from Methylococcus capsulatus (strain ATCC 33009 / NCIMB 11132 / Bath).